A 291-amino-acid chain; its full sequence is 33 kDa chaperonin (291 aa).

2 disulfide bridges follow: C237/C239 and C270/C273.

It belongs to the HSP33 family. Under oxidizing conditions two disulfide bonds are formed involving the reactive cysteines. Under reducing conditions zinc is bound to the reactive cysteines and the protein is inactive.

It localises to the cytoplasm. Its function is as follows. Redox regulated molecular chaperone. Protects both thermally unfolding and oxidatively damaged proteins from irreversible aggregation. Plays an important role in the bacterial defense system toward oxidative stress. The chain is 33 kDa chaperonin from Halalkalibacterium halodurans (strain ATCC BAA-125 / DSM 18197 / FERM 7344 / JCM 9153 / C-125) (Bacillus halodurans).